The primary structure comprises 413 residues: Arginine biosynthesis bifunctional protein ArgJ (413 aa).

Residues threonine 154, lysine 180, threonine 191, glutamate 277, asparagine 408, and threonine 413 each contribute to the substrate site. Threonine 191 acts as the Nucleophile in catalysis.

It belongs to the ArgJ family. Heterotetramer of two alpha and two beta chains.

The protein localises to the cytoplasm. It carries out the reaction N(2)-acetyl-L-ornithine + L-glutamate = N-acetyl-L-glutamate + L-ornithine. The catalysed reaction is L-glutamate + acetyl-CoA = N-acetyl-L-glutamate + CoA + H(+). It functions in the pathway amino-acid biosynthesis; L-arginine biosynthesis; L-ornithine and N-acetyl-L-glutamate from L-glutamate and N(2)-acetyl-L-ornithine (cyclic): step 1/1. Its pathway is amino-acid biosynthesis; L-arginine biosynthesis; N(2)-acetyl-L-ornithine from L-glutamate: step 1/4. Its function is as follows. Catalyzes two activities which are involved in the cyclic version of arginine biosynthesis: the synthesis of N-acetylglutamate from glutamate and acetyl-CoA as the acetyl donor, and of ornithine by transacetylation between N(2)-acetylornithine and glutamate. The protein is Arginine biosynthesis bifunctional protein ArgJ of Synechocystis sp. (strain ATCC 27184 / PCC 6803 / Kazusa).